Consider the following 109-residue polypeptide: Large ribosomal subunit protein P2 (109 aa).

A disordered region spans residues 63–109; sequence ASVPSGGAGGASGGAAAAGGAAEEAKEEEKEEEKEESDEDMGFGLFD. Gly residues predominate over residues 68 to 79; the sequence is GGAGGASGGAAA. Over residues 91–103 the composition is skewed to acidic residues; sequence EKEEEKEESDEDM. Residue S99 is modified to Phosphoserine.

This sequence belongs to the eukaryotic ribosomal protein P1/P2 family. As to quaternary structure, P1 and P2 exist as dimers at the large ribosomal subunit.

In terms of biological role, plays an important role in the elongation step of protein synthesis. This chain is Large ribosomal subunit protein P2, found in Fusarium culmorum.